A 438-amino-acid chain; its full sequence is GTPase Der (438 aa).

EngA-type G domains are found at residues 4-168 (PIVA…KNEG) and 177-352 (IKIA…DNYC). Residues 10 to 17 (GRPNVGKS), 57 to 61 (DTGGI), 120 to 123 (NKID), 183 to 190 (GKPNVGKS), 230 to 234 (DTAGV), and 295 to 298 (NKWD) each bind GTP. Residues 353–437 (KQIKTGILND…GIKLEFRERK (85 aa)) enclose the KH-like domain.

This sequence belongs to the TRAFAC class TrmE-Era-EngA-EngB-Septin-like GTPase superfamily. EngA (Der) GTPase family. In terms of assembly, associates with the 50S ribosomal subunit.

Functionally, GTPase that plays an essential role in the late steps of ribosome biogenesis. The sequence is that of GTPase Der from Clostridium kluyveri (strain NBRC 12016).